Here is a 734-residue protein sequence, read N- to C-terminus: Cytoplasmic polyadenylation element-binding protein 3 (734 aa).

Disordered regions lie at residues 1–31, 98–185, and 220–283; these read MDRN…RNVP, GSKK…AARN, and RGSL…LPPR. A compositionally biased stretch (basic and acidic residues) spans 16-26; that stretch reads PAEHPGDEKSG. Composition is skewed to low complexity over residues 121 to 140 and 232 to 242; these read SRRT…SPSR and KSFSSTTTSSS. Positions 243–256 are enriched in basic and acidic residues; the sequence is PEKEREKEKEKIEQ. The segment covering 259 to 275 has biased composition (polar residues); that stretch reads YGTTQRQSVNSQQSSAS. An RRM domain is found at 294–316; sequence IFVGGVPWDITEAALKDSFGEFG. Disordered stretches follow at residues 564 to 593 and 630 to 657; these read KAYQ…SNNS and TVYD…SNSN. A compositionally biased stretch (low complexity) spans 576–593; it reads LSSNSPSKARDGQNSNNS.

Its function is as follows. Cytoplasmic polyadenylation element binding protein that binds to and regulates the translation of specific mRNAs. This is Cytoplasmic polyadenylation element-binding protein 3 (cpb-3) from Caenorhabditis japonica.